The following is a 476-amino-acid chain: Bifunctional protein HldE (476 aa).

Positions 1–318 (MKPILPDYSQ…AEAIHGSQDT (318 aa)) are ribokinase. 195 to 198 (NMAE) is an ATP binding site. Asp264 is a catalytic residue. The tract at residues 344–476 (MTNGCFDILH…IIKAIKGGRG (133 aa)) is cytidylyltransferase.

This sequence in the N-terminal section; belongs to the carbohydrate kinase PfkB family. It in the C-terminal section; belongs to the cytidylyltransferase family. As to quaternary structure, homodimer.

The enzyme catalyses D-glycero-beta-D-manno-heptose 7-phosphate + ATP = D-glycero-beta-D-manno-heptose 1,7-bisphosphate + ADP + H(+). It carries out the reaction D-glycero-beta-D-manno-heptose 1-phosphate + ATP + H(+) = ADP-D-glycero-beta-D-manno-heptose + diphosphate. Its pathway is nucleotide-sugar biosynthesis; ADP-L-glycero-beta-D-manno-heptose biosynthesis; ADP-L-glycero-beta-D-manno-heptose from D-glycero-beta-D-manno-heptose 7-phosphate: step 1/4. The protein operates within nucleotide-sugar biosynthesis; ADP-L-glycero-beta-D-manno-heptose biosynthesis; ADP-L-glycero-beta-D-manno-heptose from D-glycero-beta-D-manno-heptose 7-phosphate: step 3/4. Its function is as follows. Catalyzes the phosphorylation of D-glycero-D-manno-heptose 7-phosphate at the C-1 position to selectively form D-glycero-beta-D-manno-heptose-1,7-bisphosphate. Catalyzes the ADP transfer from ATP to D-glycero-beta-D-manno-heptose 1-phosphate, yielding ADP-D-glycero-beta-D-manno-heptose. The sequence is that of Bifunctional protein HldE from Vibrio atlanticus (strain LGP32) (Vibrio splendidus (strain Mel32)).